A 210-amino-acid polypeptide reads, in one-letter code: Somatotropin (210 aa).

The N-terminal stretch at 1–23 (MARALVLLSVVLVSLLVNQGTAS) is a signal peptide. A Zn(2+)-binding site is contributed by histidine 38. A disulfide bridge connects residues cysteine 71 and cysteine 183. Glutamate 192 serves as a coordination point for Zn(2+). A disulfide bond links cysteine 200 and cysteine 208.

This sequence belongs to the somatotropin/prolactin family.

The protein localises to the secreted. In terms of biological role, growth hormone plays an important role in growth control. The polypeptide is Somatotropin (gh) (Ctenopharyngodon idella (Grass carp)).